The chain runs to 554 residues: Eukaryotic translation initiation factor 3 subunit D-2 (554 aa).

The tract at residues Gln291–Pro305 is RNA gate. A disordered region spans residues Asn530–Asn554.

It belongs to the eIF-3 subunit D family. As to quaternary structure, component of the eukaryotic translation initiation factor 3 (eIF-3) complex. The eIF-3 complex interacts with pix.

It is found in the cytoplasm. MRNA cap-binding component of the eukaryotic translation initiation factor 3 (eIF-3) complex, which is involved in protein synthesis of a specialized repertoire of mRNAs and, together with other initiation factors, stimulates binding of mRNA and methionyl-tRNAi to the 40S ribosome. The eIF-3 complex specifically targets and initiates translation of a subset of mRNAs involved in cell proliferation. In the eIF-3 complex, eif3d specifically recognizes and binds the 7-methylguanosine cap of a subset of mRNAs. The sequence is that of Eukaryotic translation initiation factor 3 subunit D-2 from Drosophila mojavensis (Fruit fly).